We begin with the raw amino-acid sequence, 274 residues long: Kit ligand (274 aa).

The N-terminal stretch at 1-25 is a signal peptide; it reads MKKTQTWIITCIYLQLLLFNPLVHT. At Gln26 the chain carries Pyrrolidone carboxylic acid. Residues 26–215 are Extracellular-facing; it reads QGICSNRVTD…SNSIEDSSLQ (190 aa). Intrachain disulfides connect Cys29–Cys114 and Cys68–Cys164. N-linked (GlcNAc...) asparagine glycosylation is found at Asn90, Asn145, and Asn196. The helical transmembrane segment at 216–238 threads the bilayer; the sequence is WAAVALPAFFSLVIGFAFGAFYW. Residues 239 to 274 are Cytoplasmic-facing; sequence KKKQPNLTRTVENRQINEEDNEISMLQEKEREFQEV.

Belongs to the SCF family. In terms of assembly, homodimer, non-covalently linked. Post-translationally, a soluble form is produced by proteolytic processing of isoform 1 in the extracellular domain.

It is found in the cell membrane. The protein resides in the cytoplasm. It localises to the cytoskeleton. Its subcellular location is the cell projection. The protein localises to the lamellipodium. It is found in the filopodium. The protein resides in the secreted. Stimulates the proliferation of mast cells. Able to augment the proliferation of both myeloid and lymphoid hematopoietic progenitors in bone marrow culture. Also mediates cell-cell adhesion. Acts synergistically with other cytokines, probably interleukins. This is Kit ligand (KITLG) from Bos taurus (Bovine).